The primary structure comprises 476 residues: Surface membrane glycoprotein GP46/M-2 (476 aa).

Residues 1-32 (MAQCVRRLVLAAPLAAVVALLLCTSSAPVARA) form the signal peptide. Tandem repeats lie at residues 107–130 (VMIL…PSWS), 131–154 (SMKH…PEWS), 155–178 (EMTS…TSWS), and 179–202 (SMPK…DSWR). Positions 107–202 (VMILALDFGA…FCGCVPDSWR (96 aa)) are 4 X 24 AA tandem repeats. Disordered regions lie at residues 231-255 (APGT…PSPG) and 348-370 (ALSP…RRRA). Residue C452 is the site of GPI-anchor amidated cysteine attachment. A propeptide spans 453–476 (PALFDGARLRCCALVVCAGAAPAG) (removed in mature form).

The protein resides in the cell membrane. In Leishmania amazonensis, this protein is Surface membrane glycoprotein GP46/M-2.